The primary structure comprises 334 residues: MDRTLIQEILEIVEQAAIASATLSGKGLKDEADALAVDAMRKRMNQIQMKGRIVIGEGERDEAPMLYIGEEVGTGTGPGVDFAVDPCEGTNLCAYSQRGSMAVLAASDRGGLFNAPDFYMKKLAAPPAAKGKVDIRKSATENIKILSECLGLAPDELTIVVMDRARHKDLITEIRATGARIQPISDGDVQAAIACGFAGTGTHCLMGIGAAPEGVISAAAMRALGGHFQGQLVYDPAIAQTSEWADMTKEGNLARLAEMGITDPDKVYEASELACGEHVVFAGSGITDGLLFNGVKFETDCTRTSSLIISNLNNTCSFTNTIHMKDGAQSIALN.

Positions 33, 57, 85, and 88 each coordinate Mn(2+). Substrate-binding positions include 88 to 90, Tyr119, 164 to 166, and 186 to 188; these read EGT, RAR, and DGD. Glu213 contributes to the Mn(2+) binding site.

The protein belongs to the FBPase class 2 family. As to quaternary structure, homotetramer. Mn(2+) serves as cofactor.

It carries out the reaction beta-D-fructose 1,6-bisphosphate + H2O = beta-D-fructose 6-phosphate + phosphate. The catalysed reaction is D-sedoheptulose 1,7-bisphosphate + H2O = D-sedoheptulose 7-phosphate + phosphate. It participates in carbohydrate biosynthesis; Calvin cycle. Catalyzes the hydrolysis of fructose 1,6-bisphosphate (Fru 1,6-P2) and sedoheptulose 1,7-bisphosphate (Sed 1,7-P2) to fructose 6-phosphate and sedoheptulose 7-phosphate, respectively. This chain is D-fructose 1,6-bisphosphatase class 2/sedoheptulose 1,7-bisphosphatase, found in Synechococcus sp. (strain CC9311).